The following is a 431-amino-acid chain: tRNA (adenine(37)-N6)-methyltransferase (431 aa).

In terms of domain architecture, TsaA-like spans 30–168; the sequence is TEPIGYLESC…YIADYDSPQN (139 aa). Residues 47 to 49, 90 to 91, arginine 117, leucine 127, and 148 to 151 each bind S-adenosyl-L-methionine; these read PRQ, HK, and IHGT. Disordered regions lie at residues 167–189 and 201–243; these read QNLEPQTKHHKLRAAGPSDATAN and KAQP…DRER. Positions 207–243 are enriched in basic and acidic residues; the sequence is STKEKPKCREHRTSDENSQKFRDTSEIQHTLPEDRER.

This sequence belongs to the tRNA methyltransferase O family.

It catalyses the reaction N(6)-L-threonylcarbamoyladenosine(37) in tRNA + S-adenosyl-L-methionine = N(6)-methyl,N(6)-L-threonylcarbamoyladenosine(37) in tRNA + S-adenosyl-L-homocysteine + H(+). Functionally, S-adenosyl-L-methionine-dependent methyltransferase responsible for the addition of the methyl group in the formation of N6-methyl-N6-threonylcarbamoyladenosine at position 37 (m(6)t(6)A37) of the tRNA anticodon loop of tRNA(Ser)(GCU). The methyl group of m(6)t(6)A37 may improve the efficiency of the tRNA decoding ability. May bind to tRNA. The protein is tRNA (adenine(37)-N6)-methyltransferase of Rattus norvegicus (Rat).